A 227-amino-acid polypeptide reads, in one-letter code: Thymidylate synthase (227 aa).

89–90 serves as a coordination point for dUMP; that stretch reads RR. C109 functions as the Nucleophile in the catalytic mechanism. DUMP is bound by residues 129–132, N140, and 170–172; these read RSND and HVY. D132 contributes to the (6R)-5,10-methylene-5,6,7,8-tetrahydrofolate binding site.

It belongs to the thymidylate synthase family. Bacterial-type ThyA subfamily. As to quaternary structure, homodimer.

It localises to the cytoplasm. The enzyme catalyses dUMP + (6R)-5,10-methylene-5,6,7,8-tetrahydrofolate = 7,8-dihydrofolate + dTMP. It functions in the pathway pyrimidine metabolism; dTTP biosynthesis. Catalyzes the reductive methylation of 2'-deoxyuridine-5'-monophosphate (dUMP) to 2'-deoxythymidine-5'-monophosphate (dTMP) while utilizing 5,10-methylenetetrahydrofolate (mTHF) as the methyl donor and reductant in the reaction, yielding dihydrofolate (DHF) as a by-product. This enzymatic reaction provides an intracellular de novo source of dTMP, an essential precursor for DNA biosynthesis. The protein is Thymidylate synthase of Bacillus atrophaeus.